The chain runs to 79 residues: uncharacterized protein (79 aa).

Belongs to the UPF0440 family.

This is an uncharacterized protein from Methanocella arvoryzae (strain DSM 22066 / NBRC 105507 / MRE50).